The primary structure comprises 165 residues: Acireductone dioxygenase (165 aa).

Residues His90, His92, Glu96, and His134 each contribute to the Fe(2+) site. Ni(2+)-binding residues include His90, His92, Glu96, and His134.

This sequence belongs to the acireductone dioxygenase (ARD) family. In terms of assembly, monomer. The cofactor is Fe(2+). It depends on Ni(2+) as a cofactor.

It carries out the reaction 1,2-dihydroxy-5-(methylsulfanyl)pent-1-en-3-one + O2 = 3-(methylsulfanyl)propanoate + CO + formate + 2 H(+). It catalyses the reaction 1,2-dihydroxy-5-(methylsulfanyl)pent-1-en-3-one + O2 = 4-methylsulfanyl-2-oxobutanoate + formate + 2 H(+). The protein operates within amino-acid biosynthesis; L-methionine biosynthesis via salvage pathway; L-methionine from S-methyl-5-thio-alpha-D-ribose 1-phosphate: step 5/6. Catalyzes 2 different reactions between oxygen and the acireductone 1,2-dihydroxy-3-keto-5-methylthiopentene (DHK-MTPene) depending upon the metal bound in the active site. Fe-containing acireductone dioxygenase (Fe-ARD) produces formate and 2-keto-4-methylthiobutyrate (KMTB), the alpha-ketoacid precursor of methionine in the methionine recycle pathway. Ni-containing acireductone dioxygenase (Ni-ARD) produces methylthiopropionate, carbon monoxide and formate, and does not lie on the methionine recycle pathway. The chain is Acireductone dioxygenase from Rhodopseudomonas palustris (strain TIE-1).